A 217-amino-acid polypeptide reads, in one-letter code: U2 snRNP component ist3 (217 aa).

Positions 31–109 (AYIYIGNLDF…RLVRVDHVAS (79 aa)) constitute an RRM domain. Disordered regions lie at residues 119–138 (PANLVPLGESGSSLSVSTIN) and 154–217 (EVEQ…DLDG). Positions 128 to 138 (SGSSLSVSTIN) are enriched in polar residues. Serine 160 carries the phosphoserine modification. 2 stretches are compositionally biased toward basic and acidic residues: residues 161–176 (PKDEKDLLDPMRDYIH) and 185–198 (HESSDRSDKSDSNR). Basic residues predominate over residues 199–217 (HSRHHRRHSRSRRHRDLDG).

It belongs to the IST3 family. As to quaternary structure, belongs to the 40S cdc5-associated complex (or cwf complex), a spliceosome sub-complex reminiscent of a late-stage spliceosome composed of the U2, U5 and U6 snRNAs and at least brr2, cdc5, cwf2/prp3, cwf3/syf1, cwf4/syf3, cwf5/ecm2, spp42/cwf6, cwf7/spf27, cwf8, cwf9, cwf10, cwf11, cwf12, prp45/cwf13, cwf14, cwf15, cwf16, cwf17, cwf18, cwf19, cwf20, cwf21, cwf22, cwf23, cwf24, cwf25, cwf26, cyp7/cwf27, cwf28, cwf29/ist3, lea1, msl1, prp5/cwf1, prp10, prp12/sap130, prp17, prp22, sap61, sap62, sap114, sap145, slu7, smb1, smd1, smd3, smf1, smg1 and syf2.

It localises to the nucleus. Functionally, required for pre-mRNA splicing and spliceosome assembly. This is U2 snRNP component ist3 (cwf29) from Schizosaccharomyces pombe (strain 972 / ATCC 24843) (Fission yeast).